We begin with the raw amino-acid sequence, 299 residues long: Regucalcin (299 aa).

Glu-18 is an a divalent metal cation binding site. 3 residues coordinate substrate: Arg-101, Asn-103, and Glu-121. Residues Asn-154 and Asp-204 each coordinate a divalent metal cation. The active-site Proton donor/acceptor is Asp-204.

The protein belongs to the SMP-30/CGR1 family. Requires Zn(2+) as cofactor. It depends on Mn(2+) as a cofactor. Ca(2+) is required as a cofactor. The cofactor is Mg(2+).

It localises to the cytoplasm. It catalyses the reaction D-glucono-1,5-lactone + H2O = D-gluconate + H(+). It functions in the pathway cofactor biosynthesis; L-ascorbate biosynthesis via UDP-alpha-D-glucuronate pathway; L-ascorbate from UDP-alpha-D-glucuronate: step 3/4. In terms of biological role, gluconolactonase with low activity towards other sugar lactones, including gulonolactone and galactonolactone. Catalyzes a key step in ascorbic acid (vitamin C) biosynthesis. Can also hydrolyze diisopropyl phosphorofluoridate and phenylacetate (in vitro). Calcium-binding protein. Modulates Ca(2+) signaling, and Ca(2+)-dependent cellular processes and enzyme activities. The polypeptide is Regucalcin (Gallus gallus (Chicken)).